A 258-amino-acid chain; its full sequence is Synapse differentiation-inducing gene protein 1-like (258 aa).

Topologically, residues 1-182 (MESLSELQNP…FIVIPPRDHL (182 aa)) are extracellular. A helical transmembrane segment spans residues 183–203 (GLAIFSMLCCFWPLGIAAFYF). Topologically, residues 204 to 228 (SQGTSKAVTKGDFPLASIASRRALF) are cytoplasmic. Residues 229–249 (LAALSITIGTGVYVGVVVALI) traverse the membrane as a helical segment. Over 250–258 (AYLSKPGHI) the chain is Extracellular.

It belongs to the CD225/Dispanin family.

The protein resides in the membrane. The protein localises to the golgi apparatus. Its subcellular location is the cis-Golgi network. The sequence is that of Synapse differentiation-inducing gene protein 1-like (syndig1l) from Danio rerio (Zebrafish).